Reading from the N-terminus, the 141-residue chain is Protein archease (141 aa).

Residues aspartate 19 and aspartate 140 each contribute to the Ca(2+) site.

It belongs to the archease family.

Activates the tRNA-splicing ligase complex by facilitating the enzymatic turnover of catalytic subunit RtcB. Acts by promoting the guanylylation of RtcB, a key intermediate step in tRNA ligation. Can also alter the NTP specificity of RtcB such that ATP, dGTP or ITP is used efficiently. This is Protein archease from Thermoplasma acidophilum (strain ATCC 25905 / DSM 1728 / JCM 9062 / NBRC 15155 / AMRC-C165).